Consider the following 585-residue polypeptide: Amyloid protein-binding protein 2 (585 aa).

TPR repeat units follow at residues 50–83 (QGRL…HHCF), 120–153 (IQVG…CTLH), 206–239 (AALY…ITAG), 288–321 (SDTL…RQSV), 333–367 (HEDL…ITHI), 429–462 (AKHY…KEQL), 471–505 (ALSV…GKKL), and 514–547 (EYDY…NRLR).

Component of a CRL2 E3 ubiquitin-protein ligase complex, also named ECS (Elongin BC-CUL2/5-SOCS-box protein) complex, composed of CUL2, Elongin BC (ELOB and ELOC), RBX1 and substrate-specific adapter APPBP2. Interacts with APP; APP interaction inhibits the E3 ubiquitin-protein ligase activity of the CRL2(APPBP2) complex. Rapidly degraded by the proteasome upon overexpression of a C-terminal fragment of APP.

It localises to the nucleus. Its subcellular location is the cytoplasm. It is found in the cytoskeleton. The protein localises to the membrane. It functions in the pathway protein modification; protein ubiquitination. With respect to regulation, E3 ubiquitin-protein ligase activity of the CRL2(APPBP2) complex is inhibited by APP. Substrate-recognition component of a Cul2-RING (CRL2) E3 ubiquitin-protein ligase complex of the DesCEND (destruction via C-end degrons) pathway, which recognizes a C-degron located at the extreme C terminus of target proteins, leading to their ubiquitination and degradation. The C-degron recognized by the DesCEND pathway is usually a motif of less than ten residues and can be present in full-length proteins, truncated proteins or proteolytically cleaved forms. The CRL2(APPBP2) complex specifically recognizes proteins with a -Arg-Xaa-Xaa-Gly degron at the C-terminus, leading to their ubiquitination and degradation. The CRL2(APPBP2) complex mediates ubiquitination and degradation of truncated SELENOV selenoproteins produced by failed UGA/Sec decoding, which end with a -Arg-Xaa-Xaa-Gly degron. May play a role in intracellular protein transport: may be involved in the translocation of APP along microtubules toward the cell surface. This chain is Amyloid protein-binding protein 2, found in Mus musculus (Mouse).